Consider the following 419-residue polypeptide: Synaptosomal-associated protein 47 (419 aa).

T-SNARE coiled-coil homology domains lie at 109-171 and 356-418; these read AANP…LTEL and KDWP…MRKL.

This sequence belongs to the SVAP1 family. In terms of assembly, associates with the BLOC-1 complex. Interacts with BLOC1S6. Forms a complex containing SNAP47, VAMP2 and STX1A.

It is found in the endomembrane system. It localises to the cytoplasm. The protein localises to the perinuclear region. May play a role in intracellular membrane fusion. This chain is Synaptosomal-associated protein 47 (Snap47), found in Rattus norvegicus (Rat).